The sequence spans 367 residues: UDP-N-acetylglucosamine--N-acetylmuramyl-(pentapeptide) pyrophosphoryl-undecaprenol N-acetylglucosamine transferase (367 aa).

UDP-N-acetyl-alpha-D-glucosamine-binding positions include 15-17 (TGG), Asn127, Arg163, Ser191, Ile249, and Gln294.

Belongs to the glycosyltransferase 28 family. MurG subfamily.

Its subcellular location is the cell inner membrane. It carries out the reaction di-trans,octa-cis-undecaprenyl diphospho-N-acetyl-alpha-D-muramoyl-L-alanyl-D-glutamyl-meso-2,6-diaminopimeloyl-D-alanyl-D-alanine + UDP-N-acetyl-alpha-D-glucosamine = di-trans,octa-cis-undecaprenyl diphospho-[N-acetyl-alpha-D-glucosaminyl-(1-&gt;4)]-N-acetyl-alpha-D-muramoyl-L-alanyl-D-glutamyl-meso-2,6-diaminopimeloyl-D-alanyl-D-alanine + UDP + H(+). The protein operates within cell wall biogenesis; peptidoglycan biosynthesis. Its function is as follows. Cell wall formation. Catalyzes the transfer of a GlcNAc subunit on undecaprenyl-pyrophosphoryl-MurNAc-pentapeptide (lipid intermediate I) to form undecaprenyl-pyrophosphoryl-MurNAc-(pentapeptide)GlcNAc (lipid intermediate II). In Burkholderia orbicola (strain MC0-3), this protein is UDP-N-acetylglucosamine--N-acetylmuramyl-(pentapeptide) pyrophosphoryl-undecaprenol N-acetylglucosamine transferase.